A 38-amino-acid chain; its full sequence is uncharacterized protein (38 aa).

A helical membrane pass occupies residues 10–32 (FSLLWYFLVGGGKGEVCWRFLGI).

It is found in the membrane. This is an uncharacterized protein from Saccharomyces cerevisiae (strain ATCC 204508 / S288c) (Baker's yeast).